We begin with the raw amino-acid sequence, 181 residues long: Regulator of G-protein signaling 5 (181 aa).

The RGS domain maps to 64–180; it reads SLDKLLQNNY…VRSEFYQEFI (117 aa).

It localises to the cytoplasm. The protein localises to the membrane. Its function is as follows. Inhibits signal transduction by increasing the GTPase activity of G protein alpha subunits thereby driving them into their inactive GDP-bound form. Binds to G(i)-alpha and G(o)-alpha, but not to G(s)-alpha. This Sus scrofa (Pig) protein is Regulator of G-protein signaling 5 (RGS5).